We begin with the raw amino-acid sequence, 138 residues long: Acidic phospholipase A2 1 (138 aa).

An N-terminal signal peptide occupies residues 1 to 16 (MRTLWIMAVLLVGVEG). Intrachain disulfides connect Cys42/Cys131, Cys44/Cys60, Cys59/Cys111, Cys65/Cys138, Cys66/Cys104, Cys73/Cys97, and Cys91/Cys102. Ca(2+)-binding residues include Phe43, Gly45, and Gly47. The active site involves His63. Position 64 (Asp64) interacts with Ca(2+). The active site involves Asp105.

It belongs to the phospholipase A2 family. Group II subfamily. D49 sub-subfamily. Ca(2+) is required as a cofactor. In terms of tissue distribution, expressed by the venom gland.

The protein resides in the secreted. It carries out the reaction a 1,2-diacyl-sn-glycero-3-phosphocholine + H2O = a 1-acyl-sn-glycero-3-phosphocholine + a fatty acid + H(+). Its function is as follows. Snake venom phospholipase A2 (PLA2) that has high lipolytic activity. PLA2 catalyzes the calcium-dependent hydrolysis of the 2-acyl groups in 3-sn-phosphoglycerides. The chain is Acidic phospholipase A2 1 from Craspedocephalus gramineus (Bamboo pit viper).